The sequence spans 214 residues: uncharacterized protein (214 aa).

Residues 39-68 (KLRSKKEVEEKIKEVDRELEEVVNAGVSIN) are a coiled coil. The segment covering 99-114 (EIKVEAPEPDEEKLPD) has biased composition (basic and acidic residues). The tract at residues 99–162 (EIKVEAPEPD…EEVEFDEEDD (64 aa)) is disordered. The span at 123–162 (SDLDMDFEDLGQEIPLDADEQEEEEEEEEVEEVEFDEEDD) shows a compositional bias: acidic residues. A coiled-coil region spans residues 138–212 (LDADEQEEEE…IQRLKVLSGG (75 aa)).

This is an uncharacterized protein from Archaeoglobus fulgidus (strain ATCC 49558 / DSM 4304 / JCM 9628 / NBRC 100126 / VC-16).